Reading from the N-terminus, the 285-residue chain is Ribonuclease H1 (285 aa).

The tract at residues 72 to 122 (RSSSSPDGSKGQESAHVQKLQVKTSKRPREPLGEEEEPPEPGAKHTRQDTE) is disordered. The 147-residue stretch at 135 to 281 (MGESVVVYTD…ADRLAREGAK (147 aa)) folds into the RNase H type-1 domain. Mg(2+) contacts are provided by Asp-144, Glu-185, Asp-209, and Asp-273.

It belongs to the RNase H family. Monomer. Requires Mg(2+) as cofactor.

The protein localises to the cytoplasm. The catalysed reaction is Endonucleolytic cleavage to 5'-phosphomonoester.. Its activity is regulated as follows. In the presence of magnesium, manganese is inhibitory. In terms of biological role, endonuclease that specifically degrades the RNA of RNA-DNA hybrids. Plays a role in RNA polymerase II (RNAp II) transcription termination by degrading R-loop RNA-DNA hybrid formation at G-rich pause sites located downstream of the poly(A) site and behind the elongating RNAp II. The protein is Ribonuclease H1 (Rnaseh1) of Rattus norvegicus (Rat).